A 446-amino-acid polypeptide reads, in one-letter code: Probable inactive lipase MT1628 (446 aa).

This sequence belongs to the AB hydrolase superfamily. Lipase family.

The chain is Probable inactive lipase MT1628 from Mycobacterium tuberculosis (strain CDC 1551 / Oshkosh).